A 403-amino-acid chain; its full sequence is Argininosuccinate synthase (403 aa).

Residues Ala10–Ser18 and Ala38 contribute to the ATP site. Residue Tyr89 participates in L-citrulline binding. Gly119 contacts ATP. L-aspartate is bound by residues Thr121, Asn125, and Asp126. Asn125 lines the L-citrulline pocket. L-citrulline contacts are provided by Arg129, Ser177, Ser186, Glu262, and Tyr274.

It belongs to the argininosuccinate synthase family. Type 1 subfamily. Homotetramer.

Its subcellular location is the cytoplasm. The enzyme catalyses L-citrulline + L-aspartate + ATP = 2-(N(omega)-L-arginino)succinate + AMP + diphosphate + H(+). It participates in amino-acid biosynthesis; L-arginine biosynthesis; L-arginine from L-ornithine and carbamoyl phosphate: step 2/3. The chain is Argininosuccinate synthase from Synechococcus sp. (strain CC9605).